Reading from the N-terminus, the 174-residue chain is MKNIEIEDDLYAYIASQTQHIGETASDILRRLVMPENTVVKTVVAAKPSATTKKPVGDVFSQITTDELSEYPKMVERFLKILSVLESMHGAQFDEVLTLSGRNRVYFAKDKETLLQASSVTNPKQIGESTFWVMTNNNTAKKASLIKEVAEVLGYNANDGQRLAALFAPELYED.

Belongs to the SeqA family. As to quaternary structure, homodimer. Polymerizes to form helical filaments.

The protein localises to the cytoplasm. Negative regulator of replication initiation, which contributes to regulation of DNA replication and ensures that replication initiation occurs exactly once per chromosome per cell cycle. Binds to pairs of hemimethylated GATC sequences in the oriC region, thus preventing assembly of replication proteins and re-initiation at newly replicated origins. Repression is relieved when the region becomes fully methylated. The sequence is that of Negative modulator of initiation of replication from Pseudoalteromonas atlantica (strain T6c / ATCC BAA-1087).